Reading from the N-terminus, the 499-residue chain is Salviol synthase (499 aa).

The helical transmembrane segment at 4-24 threads the bilayer; that stretch reads HIPSLVLCISFFIFFKIVSKL. C436 lines the heme pocket.

This sequence belongs to the cytochrome P450 family. It depends on heme as a cofactor. Expressed in leaf glandular trichomes.

The protein localises to the membrane. It carries out the reaction ferruginol + reduced [NADPH--hemoprotein reductase] + O2 = salviol + oxidized [NADPH--hemoprotein reductase] + H2O + H(+). It functions in the pathway secondary metabolite biosynthesis; terpenoid biosynthesis. Its function is as follows. Monooxygenase involved in the biosynthesis of labdane-related diterpenes natural products. Catalyzes the oxidation of ferruginol to produce salviol. Salviol is an intermediate in the biosynthesis of carnosate, a potent antioxidant. The polypeptide is Salviol synthase (Salvia pomifera (Apple sage)).